A 104-amino-acid chain; its full sequence is Large ribosomal subunit protein uL24 (104 aa).

The protein belongs to the universal ribosomal protein uL24 family. Part of the 50S ribosomal subunit.

In terms of biological role, one of two assembly initiator proteins, it binds directly to the 5'-end of the 23S rRNA, where it nucleates assembly of the 50S subunit. Its function is as follows. One of the proteins that surrounds the polypeptide exit tunnel on the outside of the subunit. The polypeptide is Large ribosomal subunit protein uL24 (Methylobacterium radiotolerans (strain ATCC 27329 / DSM 1819 / JCM 2831 / NBRC 15690 / NCIMB 10815 / 0-1)).